A 158-amino-acid polypeptide reads, in one-letter code: Small ribosomal subunit protein uS7 (158 aa).

It belongs to the universal ribosomal protein uS7 family. As to quaternary structure, part of the 30S ribosomal subunit. Contacts proteins S9 and S11.

Functionally, one of the primary rRNA binding proteins, it binds directly to 16S rRNA where it nucleates assembly of the head domain of the 30S subunit. Is located at the subunit interface close to the decoding center, probably blocks exit of the E-site tRNA. The sequence is that of Small ribosomal subunit protein uS7 from Gluconobacter oxydans (strain 621H) (Gluconobacter suboxydans).